The chain runs to 62 residues: Large ribosomal subunit protein bL32 (62 aa).

The span at 1 to 19 (MAVPKRKTSKTRRDKRRAS) shows a compositional bias: basic residues. Positions 1 to 20 (MAVPKRKTSKTRRDKRRASS) are disordered.

It belongs to the bacterial ribosomal protein bL32 family.

This chain is Large ribosomal subunit protein bL32, found in Finegoldia magna (strain ATCC 29328 / DSM 20472 / WAL 2508) (Peptostreptococcus magnus).